Reading from the N-terminus, the 112-residue chain is uncharacterized protein (112 aa).

Disordered stretches follow at residues methionine 1–lysine 53 and methionine 80–leucine 112. Over residues serine 8–alanine 22 the composition is skewed to polar residues. Residues glutamate 86–lysine 96 show a composition bias toward basic residues. Over residues aspartate 101–leucine 112 the composition is skewed to acidic residues.

The protein resides in the nucleus. It is found in the nucleolus. This is an uncharacterized protein from Schizosaccharomyces pombe (strain 972 / ATCC 24843) (Fission yeast).